A 191-amino-acid polypeptide reads, in one-letter code: 3-isopropylmalate dehydratase small subunit (191 aa).

The protein belongs to the LeuD family. LeuD type 1 subfamily. Heterodimer of LeuC and LeuD.

The enzyme catalyses (2R,3S)-3-isopropylmalate = (2S)-2-isopropylmalate. It participates in amino-acid biosynthesis; L-leucine biosynthesis; L-leucine from 3-methyl-2-oxobutanoate: step 2/4. Catalyzes the isomerization between 2-isopropylmalate and 3-isopropylmalate, via the formation of 2-isopropylmaleate. The protein is 3-isopropylmalate dehydratase small subunit of Staphylococcus saprophyticus subsp. saprophyticus (strain ATCC 15305 / DSM 20229 / NCIMB 8711 / NCTC 7292 / S-41).